The chain runs to 391 residues: Superoxide dismutase [Fe] 1, chloroplastic (391 aa).

A chloroplast-targeting transit peptide spans 1–73 (MAFATLVGVG…GESTNSRVLQ (73 aa)). The span at 87–119 (VNDGIDDETASDAEMDEDAEANGDESSGTDEDA) shows a compositional bias: acidic residues. The interval 87 to 120 (VNDGIDDETASDAEMDEDAEANGDESSGTDEDAS) is disordered. Fe cation is bound by residues H148, H202, D301, and H305. The disordered stretch occupies residues 370 to 391 (MPQQVNGDAREQTSGQEKSLGV). Polar residues predominate over residues 381 to 391 (QTSGQEKSLGV).

It belongs to the iron/manganese superoxide dismutase family. Homodimer. The cofactor is Fe cation.

The protein localises to the plastid. It is found in the chloroplast. It catalyses the reaction 2 superoxide + 2 H(+) = H2O2 + O2. In terms of biological role, destroys superoxide anion radicals which are normally produced within the cells and which are toxic to biological systems. In Oryza sativa subsp. japonica (Rice), this protein is Superoxide dismutase [Fe] 1, chloroplastic.